The sequence spans 691 residues: Alpha-1,4-glucan:maltose-1-phosphate maltosyltransferase (691 aa).

3 residues coordinate alpha-maltose 1-phosphate: lysine 280, glutamine 341, and aspartate 376. Aspartate 411 serves as the catalytic Nucleophile. Alpha-maltose 1-phosphate is bound at residue asparagine 412. The active-site Proton donor is glutamate 440. 550–551 (KY) lines the alpha-maltose 1-phosphate pocket.

This sequence belongs to the glycosyl hydrolase 13 family. GlgE subfamily. Homodimer.

The enzyme catalyses alpha-maltose 1-phosphate + [(1-&gt;4)-alpha-D-glucosyl](n) = [(1-&gt;4)-alpha-D-glucosyl](n+2) + phosphate. Maltosyltransferase that uses maltose 1-phosphate (M1P) as the sugar donor to elongate linear or branched alpha-(1-&gt;4)-glucans. Is involved in a branched alpha-glucan biosynthetic pathway from trehalose, together with TreS, Mak and GlgB. This chain is Alpha-1,4-glucan:maltose-1-phosphate maltosyltransferase, found in Arcanobacterium haemolyticum (strain ATCC 9345 / DSM 20595 / CCM 5947 / CCUG 17215 / LMG 16163 / NBRC 15585 / NCTC 8452 / 11018).